The sequence spans 648 residues: Protein KASH5 (648 aa).

Residues 1–606 lie on the Cytoplasmic side of the membrane; that stretch reads MHSILRSSLS…HSPGIRISQH (606 aa). A disordered region spans residues 206 to 228; that stretch reads PEAEESANLESFGGEDPRPEGPA. Residues 230–420 are a coiled coil; sequence AELLSNLEDL…EEQLSQSQEG (191 aa). Acidic residues predominate over residues 473-497; it reads EVEPEPEPEPEPEPEPEPQEVEFPS. The segment at 473-545 is disordered; it reads EVEPEPEPEP…EESWVLADPS (73 aa). The helical; Anchor for type IV membrane protein transmembrane segment at 607 to 627 threads the bilayer; that stretch reads PLVPTPVLGLLLLLLLSILLF. At 628–648 the chain is on the perinuclear space side; it reads SQSPPPTWPHLQLYYLQPPPV.

In terms of assembly, core component the LINC complex which is composed of inner nuclear membrane SUN domain-containing proteins coupled to outer nuclear membrane KASH domain-containing nesprins. SUN and KASH domain-containing proteins seem to bind each other promiscuously; however, differentially expression of LINC complex constituents is giving rise to specific assemblies. At least SUN1/2-containing core LINC complexes are proposed to be hexameric composed of three protomers of each KASH and SUN domain-containing protein. Interacts with SUN1; this interaction mediates its telomere localization by forming a SUN1:KASH5 LINC complex. Component of a probable SUN2:KASH5 LINC complex. Self-associates. Interacts with DYNC1H1, DCTN1, DYNC1I1/2 and PAFAH1B1; suggesting the association with the dynein-dynactin motor complex. Restricted to the testis and the early ootidogenesis ovary. Expressed in spermatocytes and oocytes (at protein level).

It is found in the nucleus outer membrane. The protein localises to the nucleus. Its subcellular location is the chromosome. The protein resides in the telomere. It localises to the nucleus envelope. In terms of biological role, as a component of the LINC (LInker of Nucleoskeleton and Cytoskeleton) complex, involved in the connection between the nuclear lamina and the cytoskeleton. The nucleocytoplasmic interactions established by the LINC complex play an important role in the transmission of mechanical forces across the nuclear envelope and in nuclear movement and positioning. Required for telomere attachment to nuclear envelope in the prophase of meiosis and for rapid telomere prophase movements implicating a SUN1/2:KASH5 LINC complex in which SUN1 and SUN2 seem to act at least partial redundantly. Required for homolog pairing during meiotic prophase in spermatocytes and probably oocytes. Essential for male and female gametogenesis. Recruits cytoplasmic dynein to telomere attachment sites at the nuclear envelope in spermatocytes. In oocytes is involved in meiotic resumption and spindle formation. The chain is Protein KASH5 from Mus musculus (Mouse).